We begin with the raw amino-acid sequence, 651 residues long: DNA endonuclease RBBP8 (651 aa).

Coiled-coil stretches lie at residues 35-84 (LQEL…EDRL) and 117-138 (ISEL…SLEL). Disordered stretches follow at residues 138–199 (LERL…PESR), 363–433 (NGRL…EHQA), and 487–539 (YESC…SDKS). A compositionally biased stretch (polar residues) spans 363-379 (NGRLQSKNQETSEIETT). Residues 380 to 391 (QDSKKKCLDGHT) show a composition bias toward basic and acidic residues. Residues 503–515 (VYEEEREEDDPEE) are compositionally biased toward acidic residues. Positions 525-539 (RPADRKPLVSDSDKS) are enriched in basic and acidic residues. Thr599 and Thr611 each carry phosphothreonine.

This sequence belongs to the COM1/SAE2/CtIP family. In terms of assembly, homotetramer; formed by antiparallel association of helical extensions protruding from the N-termini of two parallel coiled-coil dimers. Interacts with the MRN complex; the interaction links DNA sensing to resection. Interacts with samhd1. Phosphorylation at Thr-599 and Thr-611 promote interaction with nbn and recruitment to double-strand breaks (DSBs).

It localises to the nucleus. Its subcellular location is the chromosome. Functionally, endonuclease that cooperates with the MRE11-RAD50-NBN (MRN) complex in DNA-end resection, the first step of double-strand break (DSB) repair through the homologous recombination (HR) pathway. Functions downstream of the MRN complex and ATM, promotes ATR activation and its recruitment to DSBs in the S/G2 phase facilitating the generation of ssDNA. Specifically promotes the endonuclease activity of the MRN complex to clear DNA ends containing protein adducts: recruited to DSBs by nbn following phosphorylation, and promotes the endonuclease of mre11 to clear protein-DNA adducts and generate clean double-strand break ends. In Danio rerio (Zebrafish), this protein is DNA endonuclease RBBP8 (rbbp8).